We begin with the raw amino-acid sequence, 463 residues long: Retinoic acid receptor RXR-gamma (463 aa).

The interval 1-138 is modulating; the sequence is MYGNYSHFMK…TSPGSLVKHI (138 aa). The segment at 17–53 is disordered; it reads GSPGHSGSTSMSPSAALSTGKPMDSHPSYTDTPVSAP. The span at 21 to 33 shows a compositional bias: polar residues; that stretch reads HSGSTSMSPSAAL. 2 consecutive NR C4-type zinc fingers follow at residues 139–159 and 175–199; these read CAICGDRSSGKHYGVYSCEGC and CRDNKDCLIDKRQRNRCQYCRYQKC. A DNA-binding region (nuclear receptor) is located at residues 139-204; sequence CAICGDRSSG…RYQKCLVMGM (66 aa). The tract at residues 205 to 230 is hinge; sequence KREAVQEERQRSRERAESEAECASSG. A compositionally biased stretch (basic and acidic residues) spans 211–222; sequence EERQRSRERAES. Positions 211 to 232 are disordered; it reads EERQRSRERAESEAECASSGHE. The 229-residue stretch at 231-459 folds into the NR LBD domain; that stretch reads HEDMPVERIL…TFLMEMLETP (229 aa).

The protein belongs to the nuclear hormone receptor family. NR2 subfamily. As to quaternary structure, homodimer. Heterodimer with a RAR molecule. Binds DNA preferentially as a RAR/RXR heterodimer. Interacts with RARA. In terms of processing, acetylated by EP300.

The protein resides in the nucleus. The protein localises to the cytoplasm. Functionally, receptor for retinoic acid. Retinoic acid receptors bind as heterodimers to their target response elements in response to their ligands, all-trans or 9-cis retinoic acid, and regulate gene expression in various biological processes. The RAR/RXR heterodimers bind to the retinoic acid response elements (RARE) composed of tandem 5'-AGGTCA-3' sites known as DR1-DR5. The high affinity ligand for RXRs is 9-cis retinoic acid. This is Retinoic acid receptor RXR-gamma (RXRG) from Sus scrofa (Pig).